A 189-amino-acid polypeptide reads, in one-letter code: MTQLLIIFAAAAAGLFFFEDVRDVLKLWDIRDMRIIWYGVSIAVIVILADMAVMKWFPSHLYDDGGINKKIFSKRSIPHIIFLTLLIAFAEEMLFRGVLQTHIGLWTASLIFAALHFRYLSKWLLFIMVTAISFLLGLMYEWTGNLFVPMTAHFIIDAVFACQIRFEHVRRDKHDEHVESREKKSPESL.

The next 4 membrane-spanning stretches (helical) occupy residues 35-55 (IIWY…AVMK), 97-117 (GVLQ…ALHF), 123-143 (WLLF…YEWT), and 144-164 (GNLF…ACQI).

Its subcellular location is the cell membrane. This is an uncharacterized protein from Bacillus subtilis (strain 168).